A 371-amino-acid polypeptide reads, in one-letter code: AA9 family lytic polysaccharide monooxygenase B (371 aa).

The N-terminal stretch at 1–25 is a signal peptide; that stretch reads MSIAKIAGVVLGSAALVAGHGYVSG. Cu(2+) contacts are provided by His-20 and His-104. Cystine bridges form between Cys-74–Cys-194 and Cys-115–Cys-119. The N-linked (GlcNAc...) asparagine glycan is linked to Asn-154. His-180 and Gln-189 together coordinate O2. Tyr-191 contributes to the Cu(2+) binding site. The tract at residues 304–332 is disordered; that stretch reads HVQATSSSAAASTPTASSGASSGSGSSSS. Residues 307 to 332 show a composition bias toward low complexity; it reads ATSSSAAASTPTASSGASSGSGSSSS.

Belongs to the polysaccharide monooxygenase AA9 family. Cu(2+) serves as cofactor.

Its subcellular location is the secreted. The catalysed reaction is [(1-&gt;4)-beta-D-glucosyl]n+m + reduced acceptor + O2 = 4-dehydro-beta-D-glucosyl-[(1-&gt;4)-beta-D-glucosyl]n-1 + [(1-&gt;4)-beta-D-glucosyl]m + acceptor + H2O.. In terms of biological role, lytic polysaccharide monooxygenase (LPMO) that depolymerizes crystalline and amorphous polysaccharides via the oxidation of scissile alpha- or beta-(1-4)-glycosidic bonds, yielding C1 and C4 oxidation products. Catalysis by LPMOs requires the reduction of the active-site copper from Cu(II) to Cu(I) by a reducing agent and H(2)O(2) or O(2) as a cosubstrate. In addition to cellulose, also cleaves the beta-(1!4)-glucan backbone of tamarind xyloglucan, irrespective of substitutions which contrasts with AA9A xyloglucan cleavage activity. The polypeptide is AA9 family lytic polysaccharide monooxygenase B (Aspergillus tamarii).